Reading from the N-terminus, the 162-residue chain is UPF0114 protein Shewmr4_0646 (162 aa).

4 consecutive transmembrane segments (helical) span residues isoleucine 15–phenylalanine 35, leucine 53–valine 73, lysine 108–valine 128, and isoleucine 136–leucine 156.

It belongs to the UPF0114 family.

It is found in the cell membrane. This chain is UPF0114 protein Shewmr4_0646, found in Shewanella sp. (strain MR-4).